A 176-amino-acid polypeptide reads, in one-letter code: Sarcoplasmic calcium-binding protein (176 aa).

The residue at position 1 (T1) is an N-acetylthreonine. 4 consecutive EF-hand domains span residues 3–38 (YLVS…FTDL), 55–90 (KWWD…AFLA), 91–126 (TMTA…FGHE), and 127–160 (NESV…SFVT). Residues D16, N18, D20, and N27 each contribute to the Ca(2+) site. The Ca(2+) site is built by D104, D106, D108, S110, and E115.

Functionally, like parvalbumins, SCPs seem to be more abundant in fast contracting muscles, but no functional relationship can be established from this distribution. The chain is Sarcoplasmic calcium-binding protein from Mizuhopecten yessoensis (Japanese scallop).